A 245-amino-acid chain; its full sequence is 1-(5-phosphoribosyl)-5-[(5-phosphoribosylamino)methylideneamino] imidazole-4-carboxamide isomerase (245 aa).

Catalysis depends on Asp11, which acts as the Proton acceptor. Catalysis depends on Asp132, which acts as the Proton donor.

This sequence belongs to the HisA/HisF family.

It is found in the cytoplasm. The enzyme catalyses 1-(5-phospho-beta-D-ribosyl)-5-[(5-phospho-beta-D-ribosylamino)methylideneamino]imidazole-4-carboxamide = 5-[(5-phospho-1-deoxy-D-ribulos-1-ylimino)methylamino]-1-(5-phospho-beta-D-ribosyl)imidazole-4-carboxamide. It functions in the pathway amino-acid biosynthesis; L-histidine biosynthesis; L-histidine from 5-phospho-alpha-D-ribose 1-diphosphate: step 4/9. In Xanthobacter autotrophicus (strain ATCC BAA-1158 / Py2), this protein is 1-(5-phosphoribosyl)-5-[(5-phosphoribosylamino)methylideneamino] imidazole-4-carboxamide isomerase.